Here is a 261-residue protein sequence, read N- to C-terminus: Class II histocompatibility antigen, M beta 1 chain (261 aa).

A signal peptide spans 1 to 18 (MAALWLLLLVLSLHCMGA). Residues 19 to 112 (GGFVAHVEST…PFWNALTHRT (94 aa)) form a beta-1 region. Topologically, residues 19-218 (GGFVAHVEST…PGLSPIQTVK (200 aa)) are lumenal. 3 cysteine pairs are disulfide-bonded: cysteine 29–cysteine 97, cysteine 43–cysteine 53, and cysteine 135–cysteine 192. An N-linked (GlcNAc...) asparagine glycan is attached at asparagine 75. A beta-2 region spans residues 113 to 207 (RPPSVRVAQT…GTSEPIRGDW (95 aa)). The region spanning 114 to 204 (PPSVRVAQTT…QHSGTSEPIR (91 aa)) is the Ig-like C1-type domain. Residues 208–218 (TPGLSPIQTVK) form a connecting peptide region. Residues 219-239 (VSVSAATLGLGFIIFCVGFFR) traverse the membrane as a helical segment. At 240-261 (WRKSHSSSYTPLSGSTYPEGRH) the chain is on the cytoplasmic side. A YXXZ motif motif is present at residues 248–251 (YTPL).

The protein belongs to the MHC class II family. Heterodimer of an alpha chain (DMA) and a beta chain (DMB). Interacts with MHCII; this interaction mediates rapid selection of high-affinity peptides.

It localises to the late endosome membrane. Its subcellular location is the lysosome membrane. Plays a critical role in catalyzing the release of class II-associated invariant chain peptide (CLIP) from newly synthesized MHC class II molecules and freeing the peptide binding site for acquisition of antigenic peptides. In Mus musculus (Mouse), this protein is Class II histocompatibility antigen, M beta 1 chain (H2-DMb1).